The primary structure comprises 1043 residues: NACHT, LRR and PYD domains-containing protein 13 (1043 aa).

Residues 1 to 107 (MNFSVITCPN…CEKVRAEMKE (107 aa)) enclose the Pyrin domain. The NACHT domain maps to 229 to 558 (QTIVLVGRAG…VLEEPREFPP (330 aa)). 235 to 242 (GRAGVGKT) lines the ATP pocket. LRR repeat units follow at residues 725-749 (NENLHELDLSNSKLHASSVKGLCLA), 781-804 (NSKLTHLNFSSNKLGMTVPLILKA), 837-864 (IQHVTRLCLGFNRLQDDGIKLLCAALTH), 894-917 (NRSLTHLNLSKNSLRDEGVKFLCE), 923-946 (DGNLQSLNLSGCSFTREGCGELAN), 951-978 (NHNVKILDLGENDLQDDGVKLLCEALKP), and 1007-1030 (SKSLVNLNLLGNELDTDGVKMLCK).

The protein belongs to the NLRP family.

In terms of biological role, involved in inflammation. This is NACHT, LRR and PYD domains-containing protein 13 (NLRP13) from Homo sapiens (Human).